Here is a 328-residue protein sequence, read N- to C-terminus: Probable G-protein coupled receptor 82 (328 aa).

Residues Met-1 to Ser-11 are Extracellular-facing. Residues Asn-3 and Asn-4 are each glycosylated (N-linked (GlcNAc...) asparagine). The chain crosses the membrane as a helical span at residues Val-12 to Gly-32. At Asn-33–Ala-55 the chain is on the cytoplasmic side. The helical transmembrane segment at Asn-56–Leu-76 threads the bilayer. Residues Arg-77–Asn-92 are Extracellular-facing. A helical membrane pass occupies residues Phe-93–Ile-115. At Ser-116–Cys-156 the chain is on the cytoplasmic side. Residues Ile-157–Val-177 form a helical membrane-spanning segment. The Extracellular segment spans residues Glu-178 to Arg-197. Residues Pro-198–Val-218 form a helical membrane-spanning segment. Topologically, residues Thr-219–Leu-251 are cytoplasmic. A helical transmembrane segment spans residues Leu-252–Phe-272. Residues Tyr-273–Ser-328 are Extracellular-facing.

This sequence belongs to the G-protein coupled receptor 1 family.

The protein localises to the cell membrane. Its function is as follows. Orphan receptor. The polypeptide is Probable G-protein coupled receptor 82 (Gpr82) (Mus musculus (Mouse)).